Reading from the N-terminus, the 406-residue chain is Tryptophan 2,3-dioxygenase (406 aa).

A Phosphoserine modification is found at S19. Substrate-binding positions include F72–H76 and R144. Heme is bound at residue H328. T342 provides a ligand contact to substrate.

This sequence belongs to the tryptophan 2,3-dioxygenase family. Homotetramer. Dimer of dimers. Heme serves as cofactor. Liver.

The catalysed reaction is L-tryptophan + O2 = N-formyl-L-kynurenine. Its pathway is amino-acid degradation; L-tryptophan degradation via kynurenine pathway; L-kynurenine from L-tryptophan: step 1/2. Functionally, heme-dependent dioxygenase that catalyzes the oxidative cleavage of the L-tryptophan (L-Trp) pyrrole ring and converts L-tryptophan to N-formyl-L-kynurenine. Catalyzes the oxidative cleavage of the indole moiety. This is Tryptophan 2,3-dioxygenase from Rattus norvegicus (Rat).